The chain runs to 124 residues: Small ribosomal subunit protein uS12 (124 aa).

Residues 1 to 20 (MATISQLVRNPRKDKVQKTS) form a disordered region. At aspartate 89 the chain carries 3-methylthioaspartic acid. The disordered stretch occupies residues 104 to 124 (TSGVTARRKGRSKYGAKRPKA). Residues 109 to 124 (ARRKGRSKYGAKRPKA) show a composition bias toward basic residues.

This sequence belongs to the universal ribosomal protein uS12 family. In terms of assembly, part of the 30S ribosomal subunit. Contacts proteins S8 and S17. May interact with IF1 in the 30S initiation complex.

With S4 and S5 plays an important role in translational accuracy. Its function is as follows. Interacts with and stabilizes bases of the 16S rRNA that are involved in tRNA selection in the A site and with the mRNA backbone. Located at the interface of the 30S and 50S subunits, it traverses the body of the 30S subunit contacting proteins on the other side and probably holding the rRNA structure together. The combined cluster of proteins S8, S12 and S17 appears to hold together the shoulder and platform of the 30S subunit. The polypeptide is Small ribosomal subunit protein uS12 (Psychromonas ingrahamii (strain DSM 17664 / CCUG 51855 / 37)).